The chain runs to 741 residues: Polyribonucleotide nucleotidyltransferase (741 aa).

Residues Asp489 and Asp495 each contribute to the Mg(2+) site. A KH domain is found at 556 to 615 (PKIDSIQIPVDKIKVVIGKGGETIDKIIAETGVTIDIDEEGLVQIFSSDQDAIDRAKTII). One can recognise an S1 motif domain in the interval 625–693 (GEVYTVPVVR…EKGRVDASIK (69 aa)). The disordered stretch occupies residues 696 to 741 (LPKPEKNEDGENGEEHRHCCCSHHKPDHHSESMEAPKKSDESETKE). 2 stretches are compositionally biased toward basic and acidic residues: residues 698 to 713 (KPEKNEDGENGEEHRH) and 723 to 741 (HHSESMEAPKKSDESETKE).

It belongs to the polyribonucleotide nucleotidyltransferase family. Mg(2+) is required as a cofactor.

Its subcellular location is the cytoplasm. It carries out the reaction RNA(n+1) + phosphate = RNA(n) + a ribonucleoside 5'-diphosphate. Involved in mRNA degradation. Catalyzes the phosphorolysis of single-stranded polyribonucleotides processively in the 3'- to 5'-direction. This is Polyribonucleotide nucleotidyltransferase from Streptococcus thermophilus (strain ATCC BAA-491 / LMD-9).